The following is a 348-amino-acid chain: 4-hydroxy-2-oxovalerate aldolase 2 (348 aa).

The Pyruvate carboxyltransferase domain maps to 5-256 (LQICDSTLRD…EARIKLFDAL (252 aa)). 13–14 (RD) contributes to the substrate binding site. Asp14 lines the Mn(2+) pocket. The active-site Proton acceptor is His17. Residues Ser168 and His195 each contribute to the substrate site. Residues His195 and His197 each coordinate Mn(2+).

Belongs to the 4-hydroxy-2-oxovalerate aldolase family.

The catalysed reaction is (S)-4-hydroxy-2-oxopentanoate = acetaldehyde + pyruvate. The sequence is that of 4-hydroxy-2-oxovalerate aldolase 2 from Salinispora arenicola (strain CNS-205).